Reading from the N-terminus, the 100-residue chain is Urease subunit gamma (100 aa).

This sequence belongs to the urease gamma subunit family. As to quaternary structure, heterotrimer of UreA (gamma), UreB (beta) and UreC (alpha) subunits. Three heterotrimers associate to form the active enzyme.

Its subcellular location is the cytoplasm. It catalyses the reaction urea + 2 H2O + H(+) = hydrogencarbonate + 2 NH4(+). Its pathway is nitrogen metabolism; urea degradation; CO(2) and NH(3) from urea (urease route): step 1/1. This is Urease subunit gamma from Sinorhizobium fredii (strain NBRC 101917 / NGR234).